Here is a 517-residue protein sequence, read N- to C-terminus: U3 small nucleolar RNA-associated protein 15 homolog (517 aa).

7 WD repeats span residues 36 to 75 (KEFGAVSKIDFSPLPPHNYAVTASTRVHIYGLHSQEPIRN), 78 to 117 (RFHDTAYGGSFRGDGKLLVAGSEEGLIRLFDIGGRVSLRQ), 120 to 159 (GHSKAVHATSFLSDGFRVLSGSDDLTCRVWDVASAVELSS), 162 to 202 (EHTD…SVMT), 204 to 242 (QHGQPVECVLLYPSEALLVSTGGRYVKVWDLLKGGQQLV), 246 to 285 (NHHKTVTCACLSSSNKLLTASLDRHVKVYNSSYKVVHNFD), and 287 to 324 (ASSILSLAVAPDDEAVAVGMTNGVLSIRHRKHKEEKEA).

As to quaternary structure, part of the small subunit (SSU) processome, composed of more than 70 proteins and the RNA chaperone small nucleolar RNA (snoRNA) U3. May be a component of the proposed t-UTP subcomplex of the ribosomal small subunit (SSU) processome.

It localises to the nucleus. It is found in the nucleolus. Its function is as follows. Ribosome biogenesis factor. Involved in nucleolar processing of pre-18S ribosomal RNA. Required for optimal pre-ribosomal RNA transcription by RNA polymerase I. Part of the small subunit (SSU) processome, first precursor of the small eukaryotic ribosomal subunit. During the assembly of the SSU processome in the nucleolus, many ribosome biogenesis factors, an RNA chaperone and ribosomal proteins associate with the nascent pre-rRNA and work in concert to generate RNA folding, modifications, rearrangements and cleavage as well as targeted degradation of pre-ribosomal RNA by the RNA exosome. In Danio rerio (Zebrafish), this protein is U3 small nucleolar RNA-associated protein 15 homolog (utp15).